Reading from the N-terminus, the 197-residue chain is Putative RNA-binding protein EEED8.12 (197 aa).

Residues 61 to 138 (KSVFIGNVDF…RPIVVTAKRT (78 aa)) enclose the RRM domain. The tract at residues 142–166 (GMGHGVRGSSRGTFGRGRGAARGAP) is disordered.

The protein is Putative RNA-binding protein EEED8.12 of Caenorhabditis elegans.